Consider the following 278-residue polypeptide: Imidazole glycerol phosphate synthase subunit HisF (278 aa).

Catalysis depends on residues D11 and D130.

Belongs to the HisA/HisF family. In terms of assembly, heterodimer of HisH and HisF.

It is found in the cytoplasm. It carries out the reaction 5-[(5-phospho-1-deoxy-D-ribulos-1-ylimino)methylamino]-1-(5-phospho-beta-D-ribosyl)imidazole-4-carboxamide + L-glutamine = D-erythro-1-(imidazol-4-yl)glycerol 3-phosphate + 5-amino-1-(5-phospho-beta-D-ribosyl)imidazole-4-carboxamide + L-glutamate + H(+). It functions in the pathway amino-acid biosynthesis; L-histidine biosynthesis; L-histidine from 5-phospho-alpha-D-ribose 1-diphosphate: step 5/9. IGPS catalyzes the conversion of PRFAR and glutamine to IGP, AICAR and glutamate. The HisF subunit catalyzes the cyclization activity that produces IGP and AICAR from PRFAR using the ammonia provided by the HisH subunit. This chain is Imidazole glycerol phosphate synthase subunit HisF, found in Thermodesulfovibrio yellowstonii (strain ATCC 51303 / DSM 11347 / YP87).